A 324-amino-acid chain; its full sequence is Homeobox protein Nkx-2.5 (324 aa).

A DNA-binding region (homeobox) is located at residues 138–197 (RRKPRVLFSQAQVYELERRFKQQRYLSAPERDQLASVLKLTSTQVKIWFQNRRYKCKRQR).

The protein belongs to the NK-2 homeobox family. As to quaternary structure, homodimer (via the homeobox); binds DNA as homodimer. Interacts (via the homeobox) with TBX5 (via the T-box); this complex binds DNA. Interacts with HIPK1 and HIPK2, but not HIPK3. Interacts with the C-terminal zinc finger of GATA4 through its homeobox domain. Also interacts with JARID2 which represses its ability to activate transcription of ANF. Interacts with FBLIM1. Interacts with TBX18. Interacts with histone methyltransferase NSD2 (via HMG box). Interacts with NEDD9. Interacts with TBX1. In terms of tissue distribution, expressed only in the heart.

It is found in the nucleus. In terms of biological role, transcription factor required for the development of the heart and the spleen. During heart development, acts as a transcriptional activator of NPPA/ANF in cooperation with GATA4. May cooperate with TBX2 to negatively modulate expression of NPPA/ANF in the atrioventricular canal. Binds to the core DNA motif of NPPA promoter. Together with PBX1, required for spleen development through a mechanism that involves CDKN2B repression. Positively regulates transcription of genes such as COL3A1 and MMP2, resulting in increased pulmonary endothelial fibrosis in response to hypoxia. This is Homeobox protein Nkx-2.5 (NKX2-5) from Homo sapiens (Human).